A 377-amino-acid chain; its full sequence is E3 ubiquitin-protein ligase RING1 (377 aa).

The interval 1-205 (MDGTEIAVSP…GGAGSEDSGD (205 aa)) is necessary for transcriptional repression. At Ser9 the chain carries Phosphoserine. An RING-type zinc finger spans residues 19–59 (CPICLDMLKNTMTTKECLHRFCSDCIVTALRSGNKECPTCR). Ser111, Ser158, and Ser161 each carry phosphoserine. Disordered regions lie at residues 119–234 (QAMH…GEIE) and 280–325 (QQQE…PSLE). Positions 146–158 (DPGEGEGDGEDVS) are enriched in acidic residues. Residues 172 to 175 (KRPR) carry the Nuclear localization signal motif. The segment covering 176–199 (GGGAGGSSVGTGGGGTGGVGGGAG) has biased composition (gly residues). Phosphothreonine is present on residues Thr186 and Thr191. 2 positions are modified to phosphoserine: Ser200 and Ser203. The segment at 201 to 377 (EDSGDRGGTL…LCYAPTKDPK (177 aa)) is necessary for interaction with CBX2. Residues 206 to 215 (RGGTLGGGTL) show a composition bias toward gly residues. Residues 217–229 (PPSPPGAPSPPEP) show a composition bias toward pro residues. A phosphoserine mark is found at Ser219 and Ser225. The segment covering 286–314 (EPGGPGGGASDTGGPDGGGGEGGGAGGGD) has biased composition (gly residues).

Component of chromatin-associated Polycomb (PcG) complexes. Part of the E2F6.com-1 complex in G0 phase composed of E2F6, MGA, MAX, TFDP1, CBX3, BAT8, EUHMTASE1, RING1, RNF2/RING2 MBLR, L3MBTL2 and YAF2. Interacts with CBX2 and PCGF6. Component of a PRC1-like complex. Component of repressive BCOR complex containing Polycomb group subcomplex at least composed of RYBP, PCGF1, BCOR and RNF2/RING2. Interacts with BMI1, PHC2, PCGF2, RNF2; CBX6, CBX7 and CBX8. Interacts with MN1.

It is found in the nucleus speckle. The enzyme catalyses S-ubiquitinyl-[E2 ubiquitin-conjugating enzyme]-L-cysteine + [acceptor protein]-L-lysine = [E2 ubiquitin-conjugating enzyme]-L-cysteine + N(6)-ubiquitinyl-[acceptor protein]-L-lysine.. Its pathway is protein modification; protein ubiquitination. In terms of biological role, constitutes one of the E3 ubiquitin-protein ligases that mediate monoubiquitination of 'Lys-119' of histone H2A, thereby playing a central role in histone code and gene regulation. H2A 'Lys-119' ubiquitination gives a specific tag for epigenetic transcriptional repression and participates in X chromosome inactivation of female mammals. Essential component of a Polycomb group (PcG) multiprotein PRC1-like complex, a complex class required to maintain the transcriptionally repressive state of many genes, including Hox genes, throughout development. PcG PRC1 complex acts via chromatin remodeling and modification of histones, rendering chromatin heritably changed in its expressibility. Compared to RNF2/RING2, it does not have the main E3 ubiquitin ligase activity on histone H2A, and it may rather act as a modulator of RNF2/RING2 activity. In Gorilla gorilla gorilla (Western lowland gorilla), this protein is E3 ubiquitin-protein ligase RING1 (RING1).